We begin with the raw amino-acid sequence, 88 residues long: Small ribosomal subunit protein uS17 (88 aa).

The protein belongs to the universal ribosomal protein uS17 family. As to quaternary structure, part of the 30S ribosomal subunit.

In terms of biological role, one of the primary rRNA binding proteins, it binds specifically to the 5'-end of 16S ribosomal RNA. This is Small ribosomal subunit protein uS17 from Mycoplasmopsis pulmonis (strain UAB CTIP) (Mycoplasma pulmonis).